The chain runs to 126 residues: Large ribosomal subunit protein eL8 (126 aa).

This sequence belongs to the eukaryotic ribosomal protein eL8 family. In terms of assembly, part of the 50S ribosomal subunit. Probably part of the RNase P complex.

It localises to the cytoplasm. Its function is as follows. Multifunctional RNA-binding protein that recognizes the K-turn motif in ribosomal RNA, the RNA component of RNase P, box H/ACA, box C/D and box C'/D' sRNAs. The chain is Large ribosomal subunit protein eL8 from Cenarchaeum symbiosum (strain A).